The primary structure comprises 42 residues: Photosystem I reaction center subunit IX (42 aa).

A helical transmembrane segment spans residues 7-27 (YLSAAPVLSTLWLGALAALLI).

The protein belongs to the PsaJ family.

The protein localises to the plastid membrane. May help in the organization of the PsaE and PsaF subunits. The polypeptide is Photosystem I reaction center subunit IX (Cuscuta reflexa (Southern Asian dodder)).